The following is a 417-amino-acid chain: Serine hydroxymethyltransferase 1 (417 aa).

Residues Leu-121 and 125-127 (GHL) contribute to the (6S)-5,6,7,8-tetrahydrofolate site. At Lys-229 the chain carries N6-(pyridoxal phosphate)lysine. 354-356 (SPF) lines the (6S)-5,6,7,8-tetrahydrofolate pocket.

Belongs to the SHMT family. In terms of assembly, homodimer. It depends on pyridoxal 5'-phosphate as a cofactor.

Its subcellular location is the cytoplasm. It catalyses the reaction (6R)-5,10-methylene-5,6,7,8-tetrahydrofolate + glycine + H2O = (6S)-5,6,7,8-tetrahydrofolate + L-serine. It functions in the pathway one-carbon metabolism; tetrahydrofolate interconversion. The protein operates within amino-acid biosynthesis; glycine biosynthesis; glycine from L-serine: step 1/1. In terms of biological role, catalyzes the reversible interconversion of serine and glycine with tetrahydrofolate (THF) serving as the one-carbon carrier. This reaction serves as the major source of one-carbon groups required for the biosynthesis of purines, thymidylate, methionine, and other important biomolecules. Also exhibits THF-independent aldolase activity toward beta-hydroxyamino acids, producing glycine and aldehydes, via a retro-aldol mechanism. This is Serine hydroxymethyltransferase 1 from Pseudomonas syringae pv. syringae (strain B728a).